The primary structure comprises 146 residues: Hemoglobin cathodic subunit beta (146 aa).

The 145-residue stretch at 2–146 folds into the Globin domain; that stretch reads QWSSSERSTI…VVSALSRQYF (145 aa). Heme b is bound by residues His-63 and His-92.

This sequence belongs to the globin family. Heterotetramer of two alpha chains and two beta chains. As to expression, red blood cells.

Involved in oxygen transport from the gills to the various peripheral tissues. This chain is Hemoglobin cathodic subunit beta, found in Conger conger (Conger eel).